Consider the following 325-residue polypeptide: Glutaminase (325 aa).

Residues serine 76, asparagine 125, glutamate 169, asparagine 176, tyrosine 200, tyrosine 252, and valine 270 each coordinate substrate.

Belongs to the glutaminase family. In terms of assembly, homotetramer.

It carries out the reaction L-glutamine + H2O = L-glutamate + NH4(+). This Clavibacter michiganensis subsp. michiganensis (strain NCPPB 382) protein is Glutaminase.